A 541-amino-acid polypeptide reads, in one-letter code: Protein VAPYRIN (541 aa).

The MSP domain occupies 4 to 138 (LIKLDPSNIV…IDSAIKVMFV (135 aa)). ANK repeat units lie at residues 176-205 (QGQT…DIEA), 209-238 (VGST…NTEG), 242-271 (SVFR…RVDS), 275-304 (DGNT…RTDV), 309-338 (EGDT…TKYV), 342-372 (LGKT…CAAA), 374-392 (KGEV…VING), 396-425 (NGWT…DLDA), 429-458 (DGYT…DVEA), and 462-491 (KGVS…SREG).

In terms of assembly, interacts with EX70I at the periarbuscular membrane (PAM) around the arbuscule hyphal tips. In terms of tissue distribution, expressed in roots.

The protein localises to the cytoplasm. The protein resides in the nucleus. It localises to the cell membrane. In terms of biological role, required for arbuscular mycorrhizal (AM) symbiosis with AM fungi (e.g. Glomus versiforme and Gigaspora gigantea) both during fungal passage across root epidermis and for arbuscule formation in cortical cells; this symbiosis promotes phosphorus (P) and copper (Cu) uptake. Essential for infection by symbiotic nitrogen-fixing rhizobial bacteria (e.g. Sinorhizobium meliloti) leading to the formation of root nodules. The polypeptide is Protein VAPYRIN (Medicago truncatula (Barrel medic)).